The chain runs to 299 residues: Ribonuclease Z (299 aa).

Positions 60, 62, 64, 65, 137, 207, and 265 each coordinate Zn(2+). Residue Asp-64 is the Proton acceptor of the active site.

It belongs to the RNase Z family. As to quaternary structure, homodimer. Requires Zn(2+) as cofactor.

It catalyses the reaction Endonucleolytic cleavage of RNA, removing extra 3' nucleotides from tRNA precursor, generating 3' termini of tRNAs. A 3'-hydroxy group is left at the tRNA terminus and a 5'-phosphoryl group is left at the trailer molecule.. In terms of biological role, zinc phosphodiesterase, which displays some tRNA 3'-processing endonuclease activity. Probably involved in tRNA maturation, by removing a 3'-trailer from precursor tRNA. The chain is Ribonuclease Z from Nitrosopumilus maritimus (strain SCM1).